Consider the following 195-residue polypeptide: Probable GTP-binding protein EngB (195 aa).

The EngB-type G domain occupies 24 to 195 (DWPEIALAGR…EAWEAILRYL (172 aa)). Residues 32-39 (GRSNVGKS), 59-63 (GKTQL), 77-80 (DVPG), 144-147 (TKAD), and 176-178 (FSS) contribute to the GTP site. 2 residues coordinate Mg(2+): S39 and T61.

The protein belongs to the TRAFAC class TrmE-Era-EngA-EngB-Septin-like GTPase superfamily. EngB GTPase family. Mg(2+) serves as cofactor.

Necessary for normal cell division and for the maintenance of normal septation. The chain is Probable GTP-binding protein EngB from Lactococcus lactis subsp. lactis (strain IL1403) (Streptococcus lactis).